The primary structure comprises 319 residues: Urease accessory protein UreD (319 aa).

The interval 298-319 (QEQPLPPSSFKTNTAVPAVRTH) is disordered.

Belongs to the UreD family. UreD, UreF and UreG form a complex that acts as a GTP-hydrolysis-dependent molecular chaperone, activating the urease apoprotein by helping to assemble the nickel containing metallocenter of UreC. The UreE protein probably delivers the nickel.

It is found in the cytoplasm. Functionally, required for maturation of urease via the functional incorporation of the urease nickel metallocenter. The protein is Urease accessory protein UreD of Synechococcus sp. (strain WH7805).